Here is a 244-residue protein sequence, read N- to C-terminus: 6-carboxyhexanoate--CoA ligase (244 aa).

It belongs to the BioW family. Homodimer. Requires Mg(2+) as cofactor.

The enzyme catalyses heptanedioate + ATP + CoA = 6-carboxyhexanoyl-CoA + AMP + diphosphate. The protein operates within metabolic intermediate metabolism; pimeloyl-CoA biosynthesis; pimeloyl-CoA from pimelate: step 1/1. Catalyzes the transformation of pimelate into pimeloyl-CoA with concomitant hydrolysis of ATP to AMP. The protein is 6-carboxyhexanoate--CoA ligase of Methanococcus maripaludis (strain DSM 14266 / JCM 13030 / NBRC 101832 / S2 / LL).